The primary structure comprises 475 residues: BTB/POZ domain-containing protein 10 (475 aa).

The disordered stretch occupies residues 1–144 (MAGRPHPYDS…SQSSSDGSCK (144 aa)). The segment covering 22 to 31 (LHSRPRKLYK) has biased composition (basic residues). A compositionally biased stretch (basic and acidic residues) spans 57-80 (GHERSRDRRRSSDRSRDSSHERAE). Residues 81–94 (SQLTPCIRNVTSPT) are compositionally biased toward polar residues. The span at 97–107 (HHIEREKDHSS) shows a compositional bias: basic and acidic residues. A compositionally biased stretch (low complexity) spans 108-144 (SRPSSPRPQRASPNGSMSSAGNSSRNSSQSSSDGSCK). The interaction with AKT family members stretch occupies residues 146–475 (SGEMVFVYEN…LDPDAQNPML (330 aa)). Positions 167–241 (ERVTLIVDNT…YKTGIIRCPD (75 aa)) constitute a BTB domain. Positions 451–475 (ELDILPSHPASGNNDLDPDAQNPML) are disordered.

As to quaternary structure, interacts (via C-terminal 330-amino-acid region) with AKT1; AKT2 and AKT3. Interacts with PPP2CA and PPP1CA. Ubiquitously expressed (at protein level).

It localises to the nucleus. Its subcellular location is the cytoplasm. Its function is as follows. Plays a major role as an activator of AKT family members by inhibiting PPP2CA-mediated dephosphorylation, thereby keeping AKTs activated. Plays a role in preventing motor neuronal death and in accelerating the growth of pancreatic beta cells. This Mus musculus (Mouse) protein is BTB/POZ domain-containing protein 10 (Btbd10).